Reading from the N-terminus, the 135-residue chain is MAVILKHLAIILLVFVIEIKMGQGSQIERRSSGVTHEMLSSISKPEKRFAFEDTVANERSPQITFSTDWGQRKRSVNEDREAAERERSPQMKRSEHEEQLMAKDEMKRFQEERNPSSDDKIAIDKRSPRYLPTII.

A signal peptide spans 1–24 (MAVILKHLAIILLVFVIEIKMGQG). Positions 61-135 (PQITFSTDWG…RSPRYLPTII (75 aa)) are disordered. The span at 75–127 (SVNEDREAAERERSPQMKRSEHEEQLMAKDEMKRFQEERNPSSDDKIAIDKRS) shows a compositional bias: basic and acidic residues.

This sequence belongs to the scoloptoxin-22 family. Expressed by the venom gland.

It localises to the secreted. The polypeptide is U-scoloptoxin(22)-Er1a (Ethmostigmus rubripes (Giant centipede)).